A 182-amino-acid polypeptide reads, in one-letter code: Ribosome maturation factor RimM (182 aa).

The region spanning 101–174 (QDEYFIHQLY…QIVVRLLPGL (74 aa)) is the PRC barrel domain.

It belongs to the RimM family. In terms of assembly, binds ribosomal protein uS19.

Its subcellular location is the cytoplasm. An accessory protein needed during the final step in the assembly of 30S ribosomal subunit, possibly for assembly of the head region. Essential for efficient processing of 16S rRNA. May be needed both before and after RbfA during the maturation of 16S rRNA. It has affinity for free ribosomal 30S subunits but not for 70S ribosomes. This chain is Ribosome maturation factor RimM, found in Roseiflexus sp. (strain RS-1).